The following is a 283-amino-acid chain: Digeranylgeranylglyceryl phosphate synthase (283 aa).

The next 8 helical transmembrane spans lie at isoleucine 21 to isoleucine 41, leucine 45 to phenylalanine 65, leucine 97 to isoleucine 117, isoleucine 135 to glycine 155, valine 158 to valine 178, leucine 204 to leucine 224, isoleucine 226 to methionine 246, and valine 261 to isoleucine 281.

The protein belongs to the UbiA prenyltransferase family. DGGGP synthase subfamily. It depends on Mg(2+) as a cofactor.

It is found in the cell membrane. It catalyses the reaction sn-3-O-(geranylgeranyl)glycerol 1-phosphate + (2E,6E,10E)-geranylgeranyl diphosphate = 2,3-bis-O-(geranylgeranyl)-sn-glycerol 1-phosphate + diphosphate. It functions in the pathway membrane lipid metabolism; glycerophospholipid metabolism. Functionally, prenyltransferase that catalyzes the transfer of the geranylgeranyl moiety of geranylgeranyl diphosphate (GGPP) to the C2 hydroxyl of (S)-3-O-geranylgeranylglyceryl phosphate (GGGP). This reaction is the second ether-bond-formation step in the biosynthesis of archaeal membrane lipids. The protein is Digeranylgeranylglyceryl phosphate synthase of Methanocaldococcus jannaschii (strain ATCC 43067 / DSM 2661 / JAL-1 / JCM 10045 / NBRC 100440) (Methanococcus jannaschii).